The chain runs to 294 residues: Phosphatidylglycerol--prolipoprotein diacylglyceryl transferase (294 aa).

The next 7 membrane-spanning stretches (helical) occupy residues 10-30, 55-75, 91-111, 119-139, 196-216, 224-244, and 258-278; these read VALA…LLAF, LVFY…VLFY, WEGG…MWFF, AFQV…FGRI, PSQL…LWWY, MAAS…IEFF, and WMTK…IMLI. Residue R138 participates in a 1,2-diacyl-sn-glycero-3-phospho-(1'-sn-glycerol) binding.

This sequence belongs to the Lgt family.

The protein resides in the cell inner membrane. It catalyses the reaction L-cysteinyl-[prolipoprotein] + a 1,2-diacyl-sn-glycero-3-phospho-(1'-sn-glycerol) = an S-1,2-diacyl-sn-glyceryl-L-cysteinyl-[prolipoprotein] + sn-glycerol 1-phosphate + H(+). The protein operates within protein modification; lipoprotein biosynthesis (diacylglyceryl transfer). Its function is as follows. Catalyzes the transfer of the diacylglyceryl group from phosphatidylglycerol to the sulfhydryl group of the N-terminal cysteine of a prolipoprotein, the first step in the formation of mature lipoproteins. The protein is Phosphatidylglycerol--prolipoprotein diacylglyceryl transferase of Psychrobacter arcticus (strain DSM 17307 / VKM B-2377 / 273-4).